Consider the following 1193-residue polypeptide: Sperm-associated antigen 5 (1193 aa).

The disordered stretch occupies residues 1–48 (MWRVKKLSLSLSPSPQTGKPSMRTPLRELTLQPGALTNSGKRSPACSS). Phosphoserine occurs at positions 12, 14, 43, 62, and 66. Residues 35-48 (ALTNSGKRSPACSS) are compositionally biased toward polar residues. The segment at 96–117 (ESDEQPLDPIPQISSTPKTSEE) is disordered. Threonine 111 carries the phosphothreonine; by GSK3-beta modification. Phosphoserine is present on residues serine 135, serine 159, and serine 334. Threonine 336 bears the Phosphothreonine mark. 3 positions are modified to phosphoserine: serine 341, serine 353, and serine 362. Residues 390 to 405 (PSAPQEKSTNTSQTGL) are compositionally biased toward polar residues. The interval 390 to 416 (PSAPQEKSTNTSQTGLVGTKHSTSETE) is disordered. Positions 482 to 850 (NKLQHLKESH…LKDTVENLTA (369 aa)) are interaction with KNSTRN. Coiled coils occupy residues 545–608 (CCFD…SMRE) and 759–868 (QLTQ…EKTR). Position 937 is a phosphothreonine; by GSK3-beta (threonine 937). Serine 974 carries the phosphoserine; by GSK3-beta modification. Residue threonine 978 is modified to Phosphothreonine; by GSK3-beta. The stretch at 979–1174 (ELQSLCSLLQ…VQHIYKTLLS (196 aa)) forms a coiled coil.

As to quaternary structure, homodimer, with a globular head domain and a long stalk. Homooligomer; the globular head domains associate, resulting in aster-like structures. Binds to microtubules in the mitotic spindle. Interacts with DCLRE1B/Apollo. Part of an astrin (SPAG5)-kinastrin (SKAP) complex containing KNSTRN, SPAG5, PLK1, DYNLL1 and SGO2. Interacts with KNSTRN. Interacts with RPTOR; this interaction competes with RPTOR binding to MTOR, resulting in decreased mTORC1 formation. Interacts with G3BP1. The complex formed with G3BP1 AND RPTOR is increased by oxidative stress. Interacts with OSBPL8, PCM1 and CDK5RAP2. Interacts (via C-terminus) with NUMA1 (via C-terminus); this interaction promotes the recruitment of SPAG5 to the microtubules at spindle poles in a dynein-dynactin-dependent manner. Interacts with DYNLL1. Post-translationally, phosphorylated by AURKA. Highly expressed in testis. Detected at low levels in placenta, liver, pancreas, thymus and colon.

It is found in the cytoplasm. The protein localises to the cytoskeleton. Its subcellular location is the spindle. It localises to the spindle pole. The protein resides in the chromosome. It is found in the centromere. The protein localises to the kinetochore. Its subcellular location is the midbody. It localises to the microtubule organizing center. The protein resides in the centrosome. It is found in the cytoplasmic granule. The protein localises to the centriolar satellite. Its function is as follows. Essential component of the mitotic spindle required for normal chromosome segregation and progression into anaphase. Required for chromosome alignment, normal timing of sister chromatid segregation, and maintenance of spindle pole architecture. In complex with SKAP, promotes stable microtubule-kinetochore attachments. May contribute to the regulation of separase activity. May regulate AURKA localization to mitotic spindle, but not to centrosomes and CCNB1 localization to both mitotic spindle and centrosomes. Involved in centriole duplication. Required for CDK5RAP2, CEP152, WDR62 and CEP63 centrosomal localization and promotes the centrosomal localization of CDK2. In non-mitotic cells, upon stress induction, inhibits mammalian target of rapamycin complex 1 (mTORC1) association and recruits the mTORC1 component RPTOR to stress granules (SGs), thereby preventing mTORC1 hyperactivation-induced apoptosis. May enhance GSK3B-mediated phosphorylation of other substrates, such as MAPT/TAU. The chain is Sperm-associated antigen 5 (SPAG5) from Homo sapiens (Human).